The primary structure comprises 176 residues: Neuropeptide-like protein 1 (176 aa).

An N-terminal signal peptide occupies residues 1-19; it reads MKATFVLACLLVIAAVSHA. The segment at 59 to 79 is disordered; it reads GKRSAEQNEQANKEDKATSDK. Over residues 61-79 the composition is skewed to basic and acidic residues; the sequence is RSAEQNEQANKEDKATSDK.

Functionally, in AWC olfactory sensory neurons, required for the detection of preferred food sources. This chain is Neuropeptide-like protein 1 (nlp-1), found in Caenorhabditis elegans.